The sequence spans 301 residues: Very-long-chain aldehyde decarbonylase GL1-10 (301 aa).

A run of 3 helical transmembrane segments spans residues valine 36–valine 56, phenylalanine 94–isoleucine 114, and serine 187–leucine 207. Residues leucine 131 to threonine 265 enclose the Fatty acid hydroxylase domain.

Belongs to the sterol desaturase family. In terms of assembly, homodimer. In terms of tissue distribution, expressed ubiquitously.

It localises to the endoplasmic reticulum membrane. It catalyses the reaction a long-chain fatty aldehyde + 2 NADPH + O2 + H(+) = a long-chain alkane + formate + 2 NADP(+) + H2O. Aldehyde decarbonylase involved in the conversion of aldehydes to alkanes. Core component of a very-long-chain alkane synthesis complex. The chain is Very-long-chain aldehyde decarbonylase GL1-10 from Oryza sativa subsp. japonica (Rice).